The sequence spans 183 residues: Large ribosomal subunit protein uL6 (183 aa).

Belongs to the universal ribosomal protein uL6 family. As to quaternary structure, part of the 50S ribosomal subunit.

Its function is as follows. This protein binds to the 23S rRNA, and is important in its secondary structure. It is located near the subunit interface in the base of the L7/L12 stalk, and near the tRNA binding site of the peptidyltransferase center. This Chlamydia trachomatis serovar A (strain ATCC VR-571B / DSM 19440 / HAR-13) protein is Large ribosomal subunit protein uL6.